Here is a 1996-residue protein sequence, read N- to C-terminus: Non-reducing polyketide synthase atnG (1996 aa).

The interval 9 to 245 (FLFGDQADAP…AELPAFGAVH (237 aa)) is N-terminal acylcarrier protein transacylase (SAT) domain. In terms of domain architecture, Ketosynthase family 3 (KS3) spans 366 to 794 (SGSVAVIGMS…GGNSCFVLEE (429 aa)). Residues Cys538, His673, and His713 each act as for beta-ketoacyl synthase activity in the active site. The tract at residues 891–1150 (AFAFTGQGAH…VKYTQAISHC (260 aa)) is malonyl-CoA:ACP transacylase (MAT) domain. Catalysis depends on Ser982, which acts as the For acyl/malonyl transferase activity. The segment at 1263-1392 (HHLVSQDDNG…CCIRQTDEQD (130 aa)) is N-terminal hotdog fold. The PKS/mFAS DH domain maps to 1263 to 1569 (HHLVSQDDNG…FRKMPRTTLH (307 aa)). The interval 1267 to 1568 (SQDDNGKEQS…RFRKMPRTTL (302 aa)) is product template (PT) domain. Residue His1295 is the Proton acceptor; for dehydratase activity of the active site. A C-terminal hotdog fold region spans residues 1416-1569 (ASGIANRFQG…FRKMPRTTLH (154 aa)). The Proton donor; for dehydratase activity role is filled by Asp1481. A disordered region spans residues 1573–1621 (GKAVPPKPAKETSHPSVEATAPATTNGRSSATNAQAEAPAPPVNGSNGH). The segment covering 1594-1607 (PATTNGRSSATNAQ) has biased composition (polar residues). Residues 1620 to 1697 (GHRKTVESVL…DAQRQLRTLE (78 aa)) enclose the Carrier domain. Residue Ser1657 is modified to O-(pantetheine 4'-phosphoryl)serine. Positions 1725 to 1923 (KRECNVVLMQ…ERTFVVWAKK (199 aa)) are thioesterase (TE) domain.

It functions in the pathway secondary metabolite biosynthesis; terpenoid biosynthesis. Non-reducing polyketide synthase; part of the gene cluster that mediates the biosynthesis of the meroterpenoids arthripenoids. The pathway begins with the HR-PKS atnH that catalyzes two chain-extension steps to form a reduced triketide, which then primes the SAT domain in the NR-PKS atnG to initiate three more cycles of extension to give a linear hexaketide corresponding to the polyketide part of arthripenoids. The FAD-dependent monooxygenase atnJ then performs an oxidative decarboxylation at C11 of the atnH/atnG product, via an electrophilic aromatic hydroxylation with concomitant ipso-decarboxylation. The membrane-bound polyprenyl transferase atnF then introduces a farnesyl group before the FAD-dependent monooxygenase atnK functions as the first epoxidase on terminal C12'-C13' olefin, followed by a second epoxidation on C7'-C8' catalyzed by atnA. The terpene cyclase/mutase atnI then initiates the sequential tricyclic ring formation through protonation of the terminal epoxide and catalyzes the regioselective and stereoselective 6/6/6-tricyclic ring formation. The cytochrome P450 monooxygenase atnM is responsible for hydroxylating both C1' and C10'. The next steps may involve ketoreduction and acetyl transfer by the ketoreductase atnB and the acetyltransferase atnC, and lead to the production of arthripenoid B, the final biosynthetic product of the atn cluster. The hydroquinone moiety in arthripenoid B is prone to undergo spontaneous oxidation to afford a benzoquinone compound, a key intermediate for generating structure diversity. For instance, addition of a cysteine followed by ring contraction gives arthripenoid A, tautomerization gives the main product arthripenoid C, addition of a molecular of water or amine affords arthripenoid D or E, respectively, and loss of one water forms arthripenoid F. The polypeptide is Non-reducing polyketide synthase atnG (Arthrinium sp).